Here is a 175-residue protein sequence, read N- to C-terminus: Endoribonuclease YbeY (175 aa).

H137, H141, and H147 together coordinate Zn(2+).

Belongs to the endoribonuclease YbeY family. Zn(2+) is required as a cofactor.

The protein resides in the cytoplasm. Functionally, single strand-specific metallo-endoribonuclease involved in late-stage 70S ribosome quality control and in maturation of the 3' terminus of the 16S rRNA. This Burkholderia ambifaria (strain ATCC BAA-244 / DSM 16087 / CCUG 44356 / LMG 19182 / AMMD) (Burkholderia cepacia (strain AMMD)) protein is Endoribonuclease YbeY.